A 295-amino-acid polypeptide reads, in one-letter code: Aspartate carbamoyltransferase catalytic subunit (295 aa).

Residues Arg49 and Thr50 each contribute to the carbamoyl phosphate site. Lys77 is an L-aspartate binding site. Carbamoyl phosphate-binding residues include Arg99, His127, and Gln130. Residues Arg161 and Arg212 each contribute to the L-aspartate site. Residues Gly251 and Pro252 each coordinate carbamoyl phosphate.

This sequence belongs to the aspartate/ornithine carbamoyltransferase superfamily. ATCase family. In terms of assembly, heterododecamer (2C3:3R2) of six catalytic PyrB chains organized as two trimers (C3), and six regulatory PyrI chains organized as three dimers (R2).

It carries out the reaction carbamoyl phosphate + L-aspartate = N-carbamoyl-L-aspartate + phosphate + H(+). The protein operates within pyrimidine metabolism; UMP biosynthesis via de novo pathway; (S)-dihydroorotate from bicarbonate: step 2/3. In terms of biological role, catalyzes the condensation of carbamoyl phosphate and aspartate to form carbamoyl aspartate and inorganic phosphate, the committed step in the de novo pyrimidine nucleotide biosynthesis pathway. The protein is Aspartate carbamoyltransferase catalytic subunit of Campylobacter jejuni subsp. doylei (strain ATCC BAA-1458 / RM4099 / 269.97).